The sequence spans 667 residues: Bifunctional polymyxin resistance protein ArnA (667 aa).

The segment at 1–304 (MKAIVFAYHD…EMGIVTDVRL (304 aa)) is formyltransferase ArnAFT. Histidine 104 serves as the catalytic Proton donor; for formyltransferase activity. Residues arginine 114 and 136 to 140 (VKKAD) each bind (6R)-10-formyltetrahydrofolate. The dehydrogenase ArnADH stretch occupies residues 314 to 667 (RRTRVLILGV…TAAPKDELNA (354 aa)). NAD(+) contacts are provided by residues aspartate 347 and 368 to 369 (DI). Residues alanine 393, tyrosine 398, and 432–433 (TS) contribute to the UDP-alpha-D-glucuronate site. Glutamate 434 acts as the Proton acceptor; for decarboxylase activity in catalysis. UDP-alpha-D-glucuronate is bound by residues arginine 460, asparagine 492, 526–535 (KLVDGGAQKR), and tyrosine 613. The Proton donor; for decarboxylase activity role is filled by arginine 619.

This sequence in the N-terminal section; belongs to the Fmt family. UDP-L-Ara4N formyltransferase subfamily. In the C-terminal section; belongs to the NAD(P)-dependent epimerase/dehydratase family. UDP-glucuronic acid decarboxylase subfamily. As to quaternary structure, homohexamer, formed by a dimer of trimers.

It carries out the reaction UDP-alpha-D-glucuronate + NAD(+) = UDP-beta-L-threo-pentopyranos-4-ulose + CO2 + NADH. The catalysed reaction is UDP-4-amino-4-deoxy-beta-L-arabinose + (6R)-10-formyltetrahydrofolate = UDP-4-deoxy-4-formamido-beta-L-arabinose + (6S)-5,6,7,8-tetrahydrofolate + H(+). Its pathway is nucleotide-sugar biosynthesis; UDP-4-deoxy-4-formamido-beta-L-arabinose biosynthesis; UDP-4-deoxy-4-formamido-beta-L-arabinose from UDP-alpha-D-glucuronate: step 1/3. It functions in the pathway nucleotide-sugar biosynthesis; UDP-4-deoxy-4-formamido-beta-L-arabinose biosynthesis; UDP-4-deoxy-4-formamido-beta-L-arabinose from UDP-alpha-D-glucuronate: step 3/3. It participates in bacterial outer membrane biogenesis; lipopolysaccharide biosynthesis. Its function is as follows. Bifunctional enzyme that catalyzes the oxidative decarboxylation of UDP-glucuronic acid (UDP-GlcUA) to UDP-4-keto-arabinose (UDP-Ara4O) and the addition of a formyl group to UDP-4-amino-4-deoxy-L-arabinose (UDP-L-Ara4N) to form UDP-L-4-formamido-arabinose (UDP-L-Ara4FN). The modified arabinose is attached to lipid A and is required for resistance to polymyxin and cationic antimicrobial peptides. The sequence is that of Bifunctional polymyxin resistance protein ArnA from Yersinia pestis bv. Antiqua (strain Antiqua).